The following is a 365-amino-acid chain: Caffeic acid 3-O-methyltransferase 1 (365 aa).

130–136 provides a ligand contact to substrate; that stretch reads MNQDKVL. Residues 162 to 180 form a substrate binding region; it reads AFEYHGTDPRFNKVFNKGM. Residues Gly208, Asp231, Asp251, Met252, and Lys265 each coordinate S-adenosyl-L-methionine. The Proton acceptor role is filled by His269.

The protein belongs to the class I-like SAM-binding methyltransferase superfamily. Cation-independent O-methyltransferase family. COMT subfamily. As to quaternary structure, homodimer.

The enzyme catalyses (E)-caffeate + S-adenosyl-L-methionine = (E)-ferulate + S-adenosyl-L-homocysteine + H(+). It participates in aromatic compound metabolism; phenylpropanoid biosynthesis. Functionally, catalyzes the conversion of caffeic acid to ferulic acid and of 5-hydroxyferulic acid to sinapic acid. The resulting products may subsequently be converted to the corresponding alcohols that are incorporated into lignins. The sequence is that of Caffeic acid 3-O-methyltransferase 1 (HOMT1) from Populus kitakamiensis (Aspen).